The primary structure comprises 124 residues: Small ribosomal subunit protein uS12 (124 aa).

Asp-90 carries the post-translational modification 3-methylthioaspartic acid.

This sequence belongs to the universal ribosomal protein uS12 family. As to quaternary structure, part of the 30S ribosomal subunit. Contacts proteins S8 and S17. May interact with IF1 in the 30S initiation complex.

Its function is as follows. With S4 and S5 plays an important role in translational accuracy. Functionally, interacts with and stabilizes bases of the 16S rRNA that are involved in tRNA selection in the A site and with the mRNA backbone. Located at the interface of the 30S and 50S subunits, it traverses the body of the 30S subunit contacting proteins on the other side and probably holding the rRNA structure together. The combined cluster of proteins S8, S12 and S17 appears to hold together the shoulder and platform of the 30S subunit. The polypeptide is Small ribosomal subunit protein uS12 (Wolbachia pipientis subsp. Culex pipiens (strain wPip)).